The sequence spans 181 residues: Large ribosomal subunit protein uL5 (181 aa).

It belongs to the universal ribosomal protein uL5 family. As to quaternary structure, part of the 50S ribosomal subunit; part of the 5S rRNA/L5/L18/L25 subcomplex. Contacts the 5S rRNA and the P site tRNA. Forms a bridge to the 30S subunit in the 70S ribosome.

In terms of biological role, this is one of the proteins that bind and probably mediate the attachment of the 5S RNA into the large ribosomal subunit, where it forms part of the central protuberance. In the 70S ribosome it contacts protein S13 of the 30S subunit (bridge B1b), connecting the 2 subunits; this bridge is implicated in subunit movement. Contacts the P site tRNA; the 5S rRNA and some of its associated proteins might help stabilize positioning of ribosome-bound tRNAs. The polypeptide is Large ribosomal subunit protein uL5 (Sulfurovum sp. (strain NBC37-1)).